Consider the following 506-residue polypeptide: Ribose import ATP-binding protein RbsA (506 aa).

ABC transporter domains follow at residues L5–R241 and R254–V498. G37–S44 contacts ATP.

Belongs to the ABC transporter superfamily. Ribose importer (TC 3.A.1.2.1) family. As to quaternary structure, the complex is composed of an ATP-binding protein (RbsA), two transmembrane proteins (RbsC) and a solute-binding protein (RbsB).

It localises to the cell inner membrane. It catalyses the reaction D-ribose(out) + ATP + H2O = D-ribose(in) + ADP + phosphate + H(+). Part of the ABC transporter complex RbsABC involved in ribose import. Responsible for energy coupling to the transport system. In Burkholderia mallei (strain ATCC 23344), this protein is Ribose import ATP-binding protein RbsA.